An 810-amino-acid polypeptide reads, in one-letter code: Coiled-coil domain-containing protein 15 (810 aa).

Coiled-coil stretches lie at residues valine 65–arginine 89, aspartate 160–threonine 189, and methionine 638–arginine 669.

As to quaternary structure, interacts with POC5, POC1B, CETN2 and FAM161A.

It localises to the cytoplasm. It is found in the cytoskeleton. Its subcellular location is the microtubule organizing center. The protein localises to the centrosome. The protein resides in the centriole. It localises to the centriolar satellite. Functionally, plays an important role in primary cilium assembly, maintenance, and length regulation. Interacts with centriole inner scaffold proteins to promote proper centriole size and integrity and assembly of functional cilia. Required for the recruitment of both the inner scaffold protein POC1B and the distal SFI1/CETN2 complex to centrioles. The polypeptide is Coiled-coil domain-containing protein 15 (Ccdc15) (Mus musculus (Mouse)).